The chain runs to 351 residues: MTALTPAPCDLVVADLGGTTLRVGRITAGTSEVHDVKRVPTNGLGRYGALAPQELQDRVMEQLTREIAAHLNRPGQAPAQAVAVSFAGPMTADGVVLAGPTLWGGPAAPLPVADVLTQQLGLPVVAANDVTAAAWRYAAAEPEPFCLTTVSSGIGNKVFRHGEIVIDQLGYGGEIGHWLVDHAEDAAPCECGGRGHLGAIASGRGALFAVRAAAAADASAFARSALAGPSGGVPEAITNEAFAAAARAGDTFARESLRRSLRPLASAVSLLFTAIGVRRYLFVGGFALALGDTFLTLLGDELVRVGCFGLDEYATRAMLALGEDDDDHCLIGIGQLAAARLGAPRAVEVTA.

This sequence belongs to the ROK (NagC/XylR) family.

The enzyme catalyses valienone + ATP = valienone 7-phosphate + ADP + H(+). It carries out the reaction validone + ATP = validone 7-phosphate + ADP + H(+). In terms of biological role, involved in the biosynthesis of the antifungal agent validamycin A. Catalyzes the phosphorylation of valienone and validone to their 7-phosphate derivatives. This Streptomyces hygroscopicus subsp. limoneus protein is C(7)-cyclitol 7-kinase.